A 446-amino-acid chain; its full sequence is Elongation factor 1-alpha (446 aa).

A tr-type G domain is found at 5 to 230 (KNHLNLVVIG…DALDQPKRPK (226 aa)). The G1 stretch occupies residues 14-21 (GHVDSGKS). 14-21 (GHVDSGKS) contributes to the GTP binding site. The G2 stretch occupies residues 70 to 74 (GITID). Positions 91-94 (DAPG) are G3. GTP is bound by residues 91–95 (DAPGH) and 153–156 (NKMD). A G4 region spans residues 153–156 (NKMD). The segment at 194 to 196 (SGW) is G5.

Belongs to the TRAFAC class translation factor GTPase superfamily. Classic translation factor GTPase family. EF-Tu/EF-1A subfamily.

Its subcellular location is the cytoplasm. Its function is as follows. This protein promotes the GTP-dependent binding of aminoacyl-tRNA to the A-site of ribosomes during protein biosynthesis. The sequence is that of Elongation factor 1-alpha (EFAA) from Stylonychia lemnae (Ciliate).